We begin with the raw amino-acid sequence, 351 residues long: L-threonine 3-dehydrogenase (351 aa).

Cys39 is a Zn(2+) binding site. Active-site charge relay system residues include Thr41 and His44. 6 residues coordinate Zn(2+): His64, Glu65, Cys94, Cys97, Cys100, and Cys108. Residues Ile176, Asp196, Arg201, 271–273 (LGI), and 295–296 (IY) each bind NAD(+).

Belongs to the zinc-containing alcohol dehydrogenase family. Homotetramer. Requires Zn(2+) as cofactor.

Its subcellular location is the cytoplasm. The catalysed reaction is L-threonine + NAD(+) = (2S)-2-amino-3-oxobutanoate + NADH + H(+). It functions in the pathway amino-acid degradation; L-threonine degradation via oxydo-reductase pathway; glycine from L-threonine: step 1/2. In terms of biological role, catalyzes the NAD(+)-dependent oxidation of L-threonine to 2-amino-3-ketobutyrate. In Francisella tularensis subsp. tularensis (strain SCHU S4 / Schu 4), this protein is L-threonine 3-dehydrogenase.